Consider the following 242-residue polypeptide: Segregation and condensation protein A (242 aa).

The protein belongs to the ScpA family. As to quaternary structure, component of a cohesin-like complex composed of ScpA, ScpB and the Smc homodimer, in which ScpA and ScpB bind to the head domain of Smc. The presence of the three proteins is required for the association of the complex with DNA.

Its subcellular location is the cytoplasm. Functionally, participates in chromosomal partition during cell division. May act via the formation of a condensin-like complex containing Smc and ScpB that pull DNA away from mid-cell into both cell halves. This chain is Segregation and condensation protein A, found in Lactococcus lactis subsp. cremoris (strain MG1363).